The sequence spans 154 residues: Low molecular weight protein-tyrosine-phosphatase PtpA (154 aa).

The Nucleophile role is filled by Cys-8. Arg-14 is an active-site residue. The active-site Proton donor is the Asp-120.

Belongs to the low molecular weight phosphotyrosine protein phosphatase family.

The enzyme catalyses O-phospho-L-tyrosyl-[protein] + H2O = L-tyrosyl-[protein] + phosphate. In terms of biological role, dephosphorylates the phosphotyrosine-containing proteins. The chain is Low molecular weight protein-tyrosine-phosphatase PtpA (ptpA) from Staphylococcus epidermidis (strain ATCC 35984 / DSM 28319 / BCRC 17069 / CCUG 31568 / BM 3577 / RP62A).